A 152-amino-acid polypeptide reads, in one-letter code: Ribosomal RNA large subunit methyltransferase H (152 aa).

S-adenosyl-L-methionine-binding positions include Leu70, Gly102, and Leu120–Phe125.

The protein belongs to the RNA methyltransferase RlmH family. Homodimer.

The protein resides in the cytoplasm. It carries out the reaction pseudouridine(1915) in 23S rRNA + S-adenosyl-L-methionine = N(3)-methylpseudouridine(1915) in 23S rRNA + S-adenosyl-L-homocysteine + H(+). Specifically methylates the pseudouridine at position 1915 (m3Psi1915) in 23S rRNA. The sequence is that of Ribosomal RNA large subunit methyltransferase H from Pelobacter propionicus (strain DSM 2379 / NBRC 103807 / OttBd1).